We begin with the raw amino-acid sequence, 103 residues long: Probable protease inhibitor Egf0.4b (103 aa).

The N-terminal stretch at 1-22 (MMSEKFALVLLVACIAFIGIET) is a signal peptide. The TIL domain occupies 35–87 (CGENEAYDSMRRGCEERCDDHNPTFCFKFTTVCWCEKGYVRDKSDTCIKVEDC).

This sequence belongs to the polydnaviridae EGF-like motif protein family.

In Microplitis demolitor bracovirus (isolate Webb) (MdBV), this protein is Probable protease inhibitor Egf0.4b (O11).